The following is a 298-amino-acid chain: Interferon-inducible double-stranded RNA-dependent protein kinase activator A homolog B (298 aa).

3 consecutive DRBM domains span residues 20-87 (TPIQ…ILRG), 112-180 (NPVG…KFKT), and 225-293 (DYVK…YLKI).

The protein belongs to the PRKRA family. Homodimer. Interacts with dicer1 and eif2ak2/pkr. Also able to interact with dsRNA. Associates with ribosomes. In terms of tissue distribution, expressed in brain, heart, kidney, liver, nerve and spleen.

It is found in the cytoplasm. The protein resides in the perinuclear region. The protein localises to the nucleus. It localises to the nucleolus. Functionally, activates eif2ak2/pkr in the absence of double-stranded RNA (dsRNA), leading to phosphorylation of eif2s1/efi2-alpha and inhibition of translation and induction of apoptosis. Required for siRNA production by dicer1 and for subsequent siRNA-mediated post-transcriptional gene silencing. Does not seem to be required for processing of pre-miRNA to miRNA by dicer1. This is Interferon-inducible double-stranded RNA-dependent protein kinase activator A homolog B (prkra-b) from Xenopus laevis (African clawed frog).